A 126-amino-acid chain; its full sequence is Protein ApaG (126 aa).

Residues 2 to 126 (SALDDSIRVE…FRLALPGLLH (125 aa)) enclose the ApaG domain.

This Shewanella sp. (strain MR-4) protein is Protein ApaG.